The chain runs to 204 residues: Cytochrome c biogenesis ATP-binding export protein CcmA (204 aa).

In terms of domain architecture, ABC transporter spans 2–202 (LEIRNVTCIR…DSNELKKIRL (201 aa)). Residue 34–41 (GQNGAGKT) participates in ATP binding.

Belongs to the ABC transporter superfamily. CcmA exporter (TC 3.A.1.107) family. In terms of assembly, the complex is composed of two ATP-binding proteins (CcmA) and two transmembrane proteins (CcmB).

The protein localises to the cell inner membrane. It catalyses the reaction heme b(in) + ATP + H2O = heme b(out) + ADP + phosphate + H(+). Functionally, part of the ABC transporter complex CcmAB involved in the biogenesis of c-type cytochromes; once thought to export heme, this seems not to be the case, but its exact role is uncertain. Responsible for energy coupling to the transport system. This is Cytochrome c biogenesis ATP-binding export protein CcmA from Aliivibrio fischeri (strain ATCC 700601 / ES114) (Vibrio fischeri).